We begin with the raw amino-acid sequence, 325 residues long: Siroheme decarboxylase NirDL subunit (325 aa).

The protein belongs to the Ahb/Nir family. Forms a complex composed of NirDL, NirG and NirH. All proteins are required for the total conversion of siroheme to didecarboxysiroheme.

It catalyses the reaction siroheme + 2 H(+) = 12,18-didecarboxysiroheme + 2 CO2. Its pathway is porphyrin-containing compound metabolism. Its function is as follows. Involved in heme d1 biosynthesis. Catalyzes the decarboxylation of siroheme into didecarboxysiroheme. The sequence is that of Siroheme decarboxylase NirDL subunit from Paracoccus denitrificans (strain Pd 1222).